Here is a 410-residue protein sequence, read N- to C-terminus: Regulator of microtubule dynamics protein 2 (410 aa).

Residues 10–27 (ILGIVVGTAGISLLLLWY) traverse the membrane as a helical segment. Residues 71–109 (RQLQILEKLNELLTHMEELKEEIRVLKEAIPKLEEYIQG) adopt a coiled-coil conformation. The residue at position 121 (Ser-121) is a Phosphoserine. The segment covering 122–131 (PQHRARKRRL) has biased composition (basic residues). The interval 122–153 (PQHRARKRRLATVQSSATSNSSEEAESEGGYV) is disordered. Thr-139 carries the phosphothreonine modification. A Phosphotyrosine modification is found at Tyr-152. A phosphothreonine mark is found at Thr-154 and Thr-157.

The protein belongs to the RMDN family. In terms of assembly, interacts with microtubules.

Its subcellular location is the membrane. The protein localises to the cytoplasm. It is found in the cytoskeleton. The protein resides in the spindle. It localises to the spindle pole. The chain is Regulator of microtubule dynamics protein 2 (RMDN2) from Bos taurus (Bovine).